Here is a 464-residue protein sequence, read N- to C-terminus: tRNA modification GTPase MnmE (464 aa).

Positions 27, 89, and 128 each coordinate (6S)-5-formyl-5,6,7,8-tetrahydrofolate. In terms of domain architecture, TrmE-type G spans 225 to 384; that stretch reads GLATAIVGRP…LEETIAHLFF (160 aa). N235 serves as a coordination point for K(+). GTP is bound by residues 235–240, 254–260, and 279–282; these read NVGKSS, TDVAGTT, and DTAG. A Mg(2+)-binding site is contributed by S239. K(+) is bound by residues T254, V256, and T259. Mg(2+) is bound at residue T260. K464 contributes to the (6S)-5-formyl-5,6,7,8-tetrahydrofolate binding site.

Belongs to the TRAFAC class TrmE-Era-EngA-EngB-Septin-like GTPase superfamily. TrmE GTPase family. Homodimer. Heterotetramer of two MnmE and two MnmG subunits. K(+) serves as cofactor.

The protein localises to the cytoplasm. Its function is as follows. Exhibits a very high intrinsic GTPase hydrolysis rate. Involved in the addition of a carboxymethylaminomethyl (cmnm) group at the wobble position (U34) of certain tRNAs, forming tRNA-cmnm(5)s(2)U34. This chain is tRNA modification GTPase MnmE, found in Levilactobacillus brevis (strain ATCC 367 / BCRC 12310 / CIP 105137 / JCM 1170 / LMG 11437 / NCIMB 947 / NCTC 947) (Lactobacillus brevis).